We begin with the raw amino-acid sequence, 514 residues long: HMG box-containing protein 1 (514 aa).

Residues 150 to 182 (ARPPPVSSSSKSEPAFPHHHWKEETPVRHERAN) form a disordered region. A compositionally biased stretch (basic and acidic residues) spans 170 to 182 (WKEETPVRHERAN). The AXH domain maps to 203 to 345 (WCNSWPSTVW…PPGHLDAINF (143 aa)). Positions 434–502 (CKRPMNAFML…EQKRLNPDCW (69 aa)) form a DNA-binding region, HMG box.

Binds TCF4. Binds RB1. Binds the second PAH repeat of SIN3A. In terms of processing, ubiquitinated by the CTLH E3 ubiquitin-protein ligase complex, leading to subsequent proteasomal degradation.

It is found in the nucleus. Transcriptional repressor that binds to the promoter region of target genes. Plays a role in the regulation of the cell cycle and of the Wnt pathway. Binds preferentially to the sequence 5'-TTCATTCATTCA-3'. Binding to the histone H1.0 promoter is enhanced by interaction with RB1. Disrupts the interaction between DNA and TCF4. The protein is HMG box-containing protein 1 (HBP1) of Pongo abelii (Sumatran orangutan).